The sequence spans 297 residues: ER membrane protein complex subunit 2 (297 aa).

At Ala2 the chain carries N-acetylalanine. 3 TPR repeats span residues His87–Asn120, Gln155–Asn188, and Cys192–Asn225. Lys255 is modified (N6-acetyllysine).

This sequence belongs to the EMC2 family. As to quaternary structure, component of the ER membrane protein complex (EMC). Interacts with WNK1 (via amphipathic alpha-helix region); promoting the ER membrane protein complex assembly by preventing EMC2 ubiquitination. Ubiquitinated when soluble in the cytoplasm, leading to its degradation by the proteasome. Interaction with EMC2 prevents its ubiquitination and degradation.

It localises to the endoplasmic reticulum membrane. In terms of biological role, part of the endoplasmic reticulum membrane protein complex (EMC) that enables the energy-independent insertion into endoplasmic reticulum membranes of newly synthesized membrane proteins. Preferentially accommodates proteins with transmembrane domains that are weakly hydrophobic or contain destabilizing features such as charged and aromatic residues. Involved in the cotranslational insertion of multi-pass membrane proteins in which stop-transfer membrane-anchor sequences become ER membrane spanning helices. It is also required for the post-translational insertion of tail-anchored/TA proteins in endoplasmic reticulum membranes. By mediating the proper cotranslational insertion of N-terminal transmembrane domains in an N-exo topology, with translocated N-terminus in the lumen of the ER, controls the topology of multi-pass membrane proteins like the G protein-coupled receptors. By regulating the insertion of various proteins in membranes, it is indirectly involved in many cellular processes. The polypeptide is ER membrane protein complex subunit 2 (Pongo abelii (Sumatran orangutan)).